A 239-amino-acid chain; its full sequence is IkB-like protein (239 aa).

ANK repeat units follow at residues 48–80 (SKIT…EIIS), 87–118 (DGNS…GIKV), 124–153 (NGIT…NPNQ), and 158–187 (KGFN…KPLF). Residues 81-87 (HYRRDKD) carry the Nuclear localization signal motif. The Nuclear localization signal signature appears at 203-214 (KKKPKIIITSCE). The short motif at 206–213 (PKIIITSC) is the PxIxITxC motif; Interaction with host PPP3CA element. Residues 228-231 (FLCV) carry the FLCV motif motif.

This sequence belongs to the asfivirus A238L family. Interacts with host PPIA. Interacts with host PPP3CA/Calcineurin. Interacts with host RELA/p65; interaction of the 32 kDa form with host RELA results in the formation of a stable complex with NF-kappa-B. Interacts with host PPP3R1. Interacts with host EP300; this interaction inhibits the association of host EP300 with host RELA, JUN and NFATC2. The protein exists in a 28 kDa and a 32 kDa form, probably due to post-translational modifications which are neither phosphorylation, nor sumoylation.

The protein localises to the host nucleus. It is found in the host cytoplasm. Functionally, ikB-like protein that inhibits the binding of NF-kappa-B to DNA, thereby downregulating pro-inflammatory cytokine production. Forms a heterodimer with the NF-kappa-B subunit RELA/p65 and prevents the activation of the NF-kappa-B transcription factor. Inhibits calcineurin function, which is required for the induction of nuclear factor of activated T cells (NFAT)-dependent immune response genes. Prevents the binding of substrates to calcineurin without affecting the phosphatase activity. Does not contain the serine residues that are phosphorylated by host IkB kinase and thus is not degraded following stimulation of the NFkB pathway. The polypeptide is IkB-like protein (A238L) (Ornithodoros (relapsing fever ticks)).